Here is a 1039-residue protein sequence, read N- to C-terminus: Integrin alpha-4 (1039 aa).

A signal peptide spans 1 to 40 (MFSTKSAWLRNGGADQGPRGIALREAVMLLLYFGVPTGPS). The Extracellular portion of the chain corresponds to 41-983 (YNLDPENALL…LHHQRPKRHF (943 aa)). FG-GAP repeat units follow at residues 42-107 (NLDP…PNQT), 117-184 (SGEP…TELS), 193-244 (DYTR…QYKA), 246-298 (VDRQ…ENEL), 299-358 (NIVY…GAVM), 362-419 (ERVL…GISS), and 423-485 (QRIE…HPES). 3 N-linked (GlcNAc...) asparagine glycosylation sites follow: asparagine 86, asparagine 105, and asparagine 145. Cysteines 98 and 108 form a disulfide. 2 disulfide bridges follow: cysteine 151/cysteine 172 and cysteine 190/cysteine 205. The N-linked (GlcNAc...) asparagine glycan is linked to asparagine 236. Residues aspartate 321, asparagine 323, aspartate 325, aspartate 329, aspartate 384, aspartate 386, aspartate 388, aspartate 392, aspartate 446, aspartate 448, asparagine 450, tyrosine 452, and aspartate 454 each coordinate Ca(2+). An N-linked (GlcNAc...) asparagine glycan is attached at asparagine 487. Cystine bridges form between cysteine 493–cysteine 502 and cysteine 508–cysteine 564. 2 N-linked (GlcNAc...) asparagine glycosylation sites follow: asparagine 525 and asparagine 545. The SG1 signature appears at 613–623 (KKEKDVIRKMI). Cysteine 629 and cysteine 634 are oxidised to a cystine. Residues asparagine 633, asparagine 652, and asparagine 667 are each glycosylated (N-linked (GlcNAc...) asparagine). An intrachain disulfide couples cysteine 705 to cysteine 718. N-linked (GlcNAc...) asparagine glycans are attached at residues asparagine 813 and asparagine 828. Intrachain disulfides connect cysteine 859/cysteine 897 and cysteine 904/cysteine 909. The helical transmembrane segment at 984 to 1007 (TIIIITISLLLGLIVLLLISCVMW) threads the bilayer. Topologically, residues 1008–1039 (KAGFFKRQYKSILQEENRRDSWSYVNSKSNDD) are cytoplasmic. Residues 1010–1014 (GFFKR) carry the GFFKR motif motif. At serine 1028 the chain carries Phosphoserine.

The protein belongs to the integrin alpha chain family. Heterodimer of an alpha and a beta subunit. The alpha subunit can sometimes be cleaved into two non-covalently associated fragments. Alpha-4 associates with either beta-1 or beta-7. Alpha-4 interacts with PXN, LPXN, and TGFB1I1/HIC5. Interacts with CSPG4 through CSPG4 chondroitin sulfate glycosaminoglycan. Interacts with JAML; integrin alpha-4/beta-1 may regulate leukocyte to endothelial cells adhesion by controlling JAML homodimerization. ITGA4:ITGB1 is found in a ternary complex with CX3CR1 and CX3CL1. Interacts with MDK. ITGA4:ITGB1 interacts with MDK; this interaction mediates MDK-induced osteoblast cells migration through PXN phosphorylation. Integrin ITGA4:ITGB1 interacts with SVEP1 (via Sushi domain 21); thereby inhibits Ca(2+) intracellular signaling and as a result represses vasocontraction. ITGA4:ITGB1 interacts with SELP. ITGA4:ITGB1 interacts with BCAM. Post-translationally, phosphorylation on Ser-1028 inhibits PXN binding. In terms of tissue distribution, expressed in the media layer of the arterial wall (at protein level). Weakly expression in the thymus, spleen and mesenteric lymph nodes.

It is found in the membrane. Functionally, integrins alpha-4/beta-1 (VLA-4 or LPAM-2) and alpha-4/beta-7 (LPAM-1) are receptors for fibronectin. They recognize one or more domains within the alternatively spliced CS-1 and CS-5 regions of fibronectin. They are also receptors for VCAM1. Integrin alpha-4/beta-1 recognizes the sequence Q-I-D-S in VCAM1. Integrin alpha-4/beta-7 is also a receptor for MADCAM1. It recognizes the sequence L-D-T in MADCAM1. On activated endothelial cells integrin VLA-4 triggers homotypic aggregation for most VLA-4-positive leukocyte cell lines. It may also participate in cytolytic T-cell interactions with target cells. ITGA4:ITGB1 binds to fractalkine (CX3CL1) and may act as its coreceptor in CX3CR1-dependent fractalkine signaling. ITGA4:ITGB1 binds to PLA2G2A via a site (site 2) which is distinct from the classical ligand-binding site (site 1) and this induces integrin conformational changes and enhanced ligand binding to site 1. Integrin ITGA4:ITGB1 represses PRKCA-mediated L-type voltage-gated channel Ca(2+) influx and ROCK-mediated calcium sensitivity in vascular smooth muscle cells via its interaction with SVEP1, thereby inhibiting vasocontraction. This Mus musculus (Mouse) protein is Integrin alpha-4 (Itga4).